The chain runs to 312 residues: Expansin-A24 (312 aa).

Positions 1–27 (MELLKRKLYAKILMMVMVIWIAPMTNG) are cleaved as a signal peptide. The disordered stretch occupies residues 31–86 (ASHVPGGRPGAHPSHGAHPAHGAHPSHGAHPSHGAHPSHGAHPSHGALPSHGGQVP). The segment covering 40–77 (GAHPSHGAHPAHGAHPSHGAHPSHGAHPSHGAHPSHGA) has biased composition (low complexity). Repeat copies occupy residues 42 to 47 (HPSHGA), 48 to 53 (HPAHGA), 54 to 59 (HPSHGA), 60 to 65 (HPSHGA), 66 to 71 (HPSHGA), and 72 to 77 (HPSHGA). The segment at 42-77 (HPSHGAHPAHGAHPSHGAHPSHGAHPSHGAHPSHGA) is 6 X 6 AA tandem repeats of H-P-S-H-G-A. Positions 108-218 (QGACGYGDLH…RRVPCAKIGG (111 aa)) constitute an Expansin-like EG45 domain. An Expansin-like CBD domain is found at 228 to 307 (HFLMILPYNV…DWKCNGQSFD (80 aa)).

This sequence belongs to the expansin family. Expansin A subfamily.

The protein resides in the secreted. It is found in the cell wall. The protein localises to the membrane. Its function is as follows. Causes loosening and extension of plant cell walls by disrupting non-covalent bonding between cellulose microfibrils and matrix glucans. No enzymatic activity has been found. The chain is Expansin-A24 (EXPA24) from Arabidopsis thaliana (Mouse-ear cress).